The chain runs to 366 residues: tRNA/tmRNA (uracil-C(5))-methyltransferase (366 aa).

The S-adenosyl-L-methionine site is built by Gln-190, Tyr-218, Asn-223, Glu-239, and Asp-299. Cys-324 acts as the Nucleophile in catalysis. The active-site Proton acceptor is the Glu-358.

The protein belongs to the class I-like SAM-binding methyltransferase superfamily. RNA M5U methyltransferase family. TrmA subfamily.

It catalyses the reaction uridine(54) in tRNA + S-adenosyl-L-methionine = 5-methyluridine(54) in tRNA + S-adenosyl-L-homocysteine + H(+). It carries out the reaction uridine(341) in tmRNA + S-adenosyl-L-methionine = 5-methyluridine(341) in tmRNA + S-adenosyl-L-homocysteine + H(+). In terms of biological role, dual-specificity methyltransferase that catalyzes the formation of 5-methyluridine at position 54 (m5U54) in all tRNAs, and that of position 341 (m5U341) in tmRNA (transfer-mRNA). The protein is tRNA/tmRNA (uracil-C(5))-methyltransferase of Cronobacter sakazakii (strain ATCC BAA-894) (Enterobacter sakazakii).